The following is a 1456-amino-acid chain: CLIP-associating protein 1-B (1456 aa).

HEAT repeat units follow at residues 68–87 (LLGM…RFRT), 88–124 (QIGT…QASN), and 163–200 (LTLS…HVGE). The interval 237-296 (TDKNFDDEDSVDGNRPSSASSSASSKAPQTARRGVSLGTGRRPGTSSAAPKTGGTAKEGA) is disordered. The span at 284–296 (AAPKTGGTAKEGA) shows a compositional bias: low complexity. The HEAT 4 repeat unit spans residues 442–479 (THVPRLIPIITSNCTSKSVAVRRRCYEFLDLLLQEWQT). Disordered stretches follow at residues 547–728 (SIVS…DRFG) and 776–796 (GMYS…ERSY). Over residues 550–569 (SLPQSDRSSSSSQESLNRPL) the composition is skewed to low complexity. Polar residues predominate over residues 573-594 (RSPTGSTVSRATSKSTTGSLQR). 3 stretches are compositionally biased toward low complexity: residues 603–618 (AAAT…ASTA), 642–656 (QSSG…TPAD), and 665–679 (VVSQ…SSPG). Polar residues predominate over residues 711 to 721 (QGCSRETSPSR). Residues 785–796 (SDASSACSERSY) are compositionally biased toward low complexity. The stretch at 930–967 (QQFNILMRFIVDQTQTPNLKVKVAILKYIESLARQMDP) is one HEAT 5 repeat. 2 disordered regions span residues 1037-1080 (LKNS…GLSP) and 1121-1147 (VRRD…DLRG). The span at 1038–1050 (KNSSNSSMGSPSN) shows a compositional bias: low complexity. The segment covering 1062–1074 (SRASPLTSPTNCS) has biased composition (polar residues). Positions 1121–1130 (VRRDGKKESE) are enriched in basic and acidic residues. HEAT repeat units follow at residues 1260-1297 (EHFK…NQPA) and 1378-1415 (QILP…VIGE).

The protein belongs to the CLASP family. As to quaternary structure, interacts (via C-terminus) with clip1/clip-170, and cenpe.

The protein resides in the cytoplasm. The protein localises to the cytoskeleton. It localises to the microtubule organizing center. It is found in the centrosome. Its subcellular location is the chromosome. The protein resides in the centromere. The protein localises to the kinetochore. It localises to the spindle. It is found in the golgi apparatus. Its subcellular location is the trans-Golgi network. Microtubule plus-end tracking protein that promotes the stabilization of dynamic microtubules during anaphase. Plays a crucial role in chromatin-induced microtubule formation. May also act at microtubule minus ends. May be involved in the nucleation of noncentrosomal microtubules originating from the trans-Golgi network (TGN). The polypeptide is CLIP-associating protein 1-B (Xenopus laevis (African clawed frog)).